The sequence spans 303 residues: D-alanine--D-alanine ligase (303 aa).

Residues 99-293 enclose the ATP-grasp domain; that stretch reads TYRFLKGTVE…FEELVEIILK (195 aa). Residue 125–176 participates in ATP binding; the sequence is GYPCVVKPRREGSSIGVFVCESDEEFQHALKEDLPRYGSVIVQKYIPGREMT. Positions 248, 260, and 262 each coordinate Mg(2+).

The protein belongs to the D-alanine--D-alanine ligase family. Requires Mg(2+) as cofactor. It depends on Mn(2+) as a cofactor.

It is found in the cytoplasm. It catalyses the reaction 2 D-alanine + ATP = D-alanyl-D-alanine + ADP + phosphate + H(+). It participates in cell wall biogenesis; peptidoglycan biosynthesis. In terms of biological role, cell wall formation. This Thermotoga maritima (strain ATCC 43589 / DSM 3109 / JCM 10099 / NBRC 100826 / MSB8) protein is D-alanine--D-alanine ligase.